A 203-amino-acid polypeptide reads, in one-letter code: Dephospho-CoA kinase (203 aa).

Residues 10-203 (IIGITGNIGS…LTGGAKGGRG (194 aa)) enclose the DPCK domain. 18 to 23 (GSGKST) contacts ATP.

Belongs to the CoaE family.

It is found in the cytoplasm. It catalyses the reaction 3'-dephospho-CoA + ATP = ADP + CoA + H(+). The protein operates within cofactor biosynthesis; coenzyme A biosynthesis; CoA from (R)-pantothenate: step 5/5. Functionally, catalyzes the phosphorylation of the 3'-hydroxyl group of dephosphocoenzyme A to form coenzyme A. This chain is Dephospho-CoA kinase, found in Thermus thermophilus (strain ATCC BAA-163 / DSM 7039 / HB27).